A 61-amino-acid polypeptide reads, in one-letter code: MAKKALVNKAARKPKFAVRGYTRCSKCGRPRAVFRKFGLCRICLREMAHAGELPGVQKSSW.

Zn(2+)-binding residues include C24, C27, C40, and C43.

Belongs to the universal ribosomal protein uS14 family. Zinc-binding uS14 subfamily. In terms of assembly, part of the 30S ribosomal subunit. Contacts proteins S3 and S10. It depends on Zn(2+) as a cofactor.

Functionally, binds 16S rRNA, required for the assembly of 30S particles and may also be responsible for determining the conformation of the 16S rRNA at the A site. The protein is Small ribosomal subunit protein uS14B of Mycobacterium ulcerans (strain Agy99).